Consider the following 480-residue polypeptide: Probable glycosyltransferase 2 (480 aa).

Residues 1–21 (MGQEGMGYNNGKGGGGGGGGL) show a composition bias toward gly residues. A disordered region spans residues 1–45 (MGQEGMGYNNGKGGGGGGGGLPMTAPRPRGASPLSSHGHHHRSRK). Topologically, residues 1 to 49 (MGQEGMGYNNGKGGGGGGGGLPMTAPRPRGASPLSSHGHHHRSRKIHRT) are cytoplasmic. A helical; Signal-anchor for type II membrane protein transmembrane segment spans residues 50 to 72 (FNNVKITVLCGLVTILVLRGTIG). Residues 73–480 (LNLSLPNQPT…DVKAKISTTS (408 aa)) lie on the Lumenal side of the membrane. N-linked (GlcNAc...) asparagine glycosylation is found at N74, N124, N129, and N458.

This sequence belongs to the glycosyltransferase 34 family.

It is found in the golgi apparatus membrane. Its function is as follows. Probable glycosyltransferase that may be involved in the biosynthesis of xyloglucan. In Oryza sativa subsp. indica (Rice), this protein is Probable glycosyltransferase 2.